Reading from the N-terminus, the 118-residue chain is uncharacterized protein (118 aa).

Helical transmembrane passes span 7–27 (VIVK…FIIE) and 34–58 (VFVA…AIIF).

The protein localises to the membrane. This is an uncharacterized protein from Saccharomyces cerevisiae (strain ATCC 204508 / S288c) (Baker's yeast).